The following is a 136-amino-acid chain: Nucleoside diphosphate kinase (136 aa).

Residues K10, F58, R86, T92, R104, and N114 each coordinate ATP. The active-site Pros-phosphohistidine intermediate is the H117.

Belongs to the NDK family. Homotetramer. It depends on Mg(2+) as a cofactor.

It is found in the cytoplasm. It catalyses the reaction a 2'-deoxyribonucleoside 5'-diphosphate + ATP = a 2'-deoxyribonucleoside 5'-triphosphate + ADP. It carries out the reaction a ribonucleoside 5'-diphosphate + ATP = a ribonucleoside 5'-triphosphate + ADP. Its function is as follows. Major role in the synthesis of nucleoside triphosphates other than ATP. The ATP gamma phosphate is transferred to the NDP beta phosphate via a ping-pong mechanism, using a phosphorylated active-site intermediate. The polypeptide is Nucleoside diphosphate kinase (Corynebacterium glutamicum (strain R)).